Consider the following 299-residue polypeptide: MTTDSAKDSRTMDFLLVTGLSGAGLSTAAKVLEDLGWYVADNLPPELISRMVGLSLTSDPPVDRLAVVIDVRSRLFTGDLGWVLTELEAEPIHTRVLYLEASDDVLIRRFEQVRRSHPLQNDGIDGTLSEGIAAERRQLAVVKAAADLVIDTSALKAHQLRQKIETAFGNDANRTMKVTVQSFGFKYGLPMDADLVCDVRFLPNPHWIPELRPHTGQDADVRDYVLSREGAEDYLDTYRHLVDLTIAGYRREGKRYMTIAVGCTGGKHRSVAMSEALARRLGSEDDISVSIVHRDLGRE.

Residue 19–26 participates in ATP binding; that stretch reads GLSGAGLS. Residue 70 to 73 participates in GTP binding; it reads DVRS.

The protein belongs to the RapZ-like family.

Its function is as follows. Displays ATPase and GTPase activities. This is Nucleotide-binding protein RER_30260 from Rhodococcus erythropolis (strain PR4 / NBRC 100887).